A 734-amino-acid polypeptide reads, in one-letter code: Photosystem I P700 chlorophyll a apoprotein A2 (734 aa).

The next 8 helical transmembrane spans lie at 46–69 (IFASHFGQLAIIFLWTSGNLFHVA), 135–158 (LYTGALFLLFLSALSLIGGWLHLQ), 175–199 (LNHHLSGLFGVSSLAWTGHLVHVAI), 273–291 (MAHHHLAIAILFLIAGHMY), 330–353 (IHFQLGLALASLGVITSLVAQHMY), 369–395 (AALYTHHQYIAGFIMTGAFAHGAIFFI), 417–439 (AIISHLSWASLFLGFHTLGLYVH), and 517–535 (FLVHHAIALGLHTTTLILV). [4Fe-4S] cluster-binding residues include Cys-559 and Cys-568. 2 helical membrane passes run 575-596 (AFYLAVFWMLNTIGWVTFYWHW) and 643-665 (LSVWAWMFLFGHLVWATGFMFLI). Chlorophyll a contacts are provided by His-654, Met-662, and Tyr-670. Trp-671 serves as a coordination point for phylloquinone. A helical transmembrane segment spans residues 707–727 (LVGLAHFSVGYIFTYAAFLIA).

It belongs to the PsaA/PsaB family. The PsaA/B heterodimer binds the P700 chlorophyll special pair and subsequent electron acceptors. PSI consists of a core antenna complex that captures photons, and an electron transfer chain that converts photonic excitation into a charge separation. The eukaryotic PSI reaction center is composed of at least 11 subunits. P700 is a chlorophyll a/chlorophyll a' dimer, A0 is one or more chlorophyll a, A1 is one or both phylloquinones and FX is a shared 4Fe-4S iron-sulfur center. is required as a cofactor.

It localises to the plastid. The protein resides in the chloroplast thylakoid membrane. The enzyme catalyses reduced [plastocyanin] + hnu + oxidized [2Fe-2S]-[ferredoxin] = oxidized [plastocyanin] + reduced [2Fe-2S]-[ferredoxin]. PsaA and PsaB bind P700, the primary electron donor of photosystem I (PSI), as well as the electron acceptors A0, A1 and FX. PSI is a plastocyanin-ferredoxin oxidoreductase, converting photonic excitation into a charge separation, which transfers an electron from the donor P700 chlorophyll pair to the spectroscopically characterized acceptors A0, A1, FX, FA and FB in turn. Oxidized P700 is reduced on the lumenal side of the thylakoid membrane by plastocyanin. In Arabis hirsuta (Hairy rock-cress), this protein is Photosystem I P700 chlorophyll a apoprotein A2.